Here is a 215-residue protein sequence, read N- to C-terminus: Flagellin B1 (215 aa).

Residues 1–12 constitute a propeptide that is removed on maturation; the sequence is MSVKNFMNNKKG.

This sequence belongs to the archaeal flagellin family.

The protein resides in the archaeal flagellum. Its function is as follows. Flagellin is the subunit protein which polymerizes to form the filaments of archaeal flagella. The sequence is that of Flagellin B1 (flaB1) from Methanococcus vannielii (strain ATCC 35089 / DSM 1224 / JCM 13029 / OCM 148 / SB).